The primary structure comprises 200 residues: Recombination protein RecR (200 aa).

Residues 59 to 74 (CDICGNVCESSPCPVC) form a C4-type zinc finger. In terms of domain architecture, Toprim spans 82–177 (SVICVVEEPK…KVTRLASGLP (96 aa)).

The protein belongs to the RecR family.

Its function is as follows. May play a role in DNA repair. It seems to be involved in an RecBC-independent recombinational process of DNA repair. It may act with RecF and RecO. The protein is Recombination protein RecR of Bifidobacterium longum (strain DJO10A).